The primary structure comprises 887 residues: UPF0182 protein CTC_00086 (887 aa).

7 consecutive transmembrane segments (helical) span residues phenylalanine 9–isoleucine 29, phenylalanine 47–leucine 67, leucine 87–tyrosine 107, valine 146–isoleucine 166, glycine 195–isoleucine 215, isoleucine 242–isoleucine 262, and isoleucine 266–threonine 286.

It belongs to the UPF0182 family.

It is found in the cell membrane. The polypeptide is UPF0182 protein CTC_00086 (Clostridium tetani (strain Massachusetts / E88)).